The primary structure comprises 414 residues: NFATC2-interacting protein (414 aa).

The disordered stretch occupies residues 1-42 (MAEPLRRRGPRSRGGRASRGARRARAARGRCPRAPRSPTRLI). Over residues 7–33 (RRGPRSRGGRASRGARRARAARGRCPR) the composition is skewed to basic residues. Ser-52 and Ser-54 each carry phosphoserine. A disordered region spans residues 63-118 (ADPGEVPVARLPAPAAPEQDSDSDSEGAAEGPAGAPRTLVRRRRRLLDPGEAPVVP). Positions 68 to 79 (VPVARLPAPAAP) are enriched in low complexity. Phosphoserine is present on residues Ser-83, Ser-85, and Ser-87. Low complexity predominate over residues 90–100 (AAEGPAGAPRT). Position 121 is a phosphoserine (Ser-121). Lys-123 participates in a covalent cross-link: Glycyl lysine isopeptide (Lys-Gly) (interchain with G-Cter in SUMO2). The interval 139-208 (KLCPSEPEDE…SSRNKSRKHT (70 aa)) is disordered. Residues 170–229 (KKKLRKKHEKEEKKMEEFPDQDISPLPQPSSRNKSRKHTEALQKLREVNKRLQDLRSCLS) adopt a coiled-coil conformation. Phosphoserine occurs at positions 193, 199, and 309. A phosphothreonine mark is found at Thr-311 and Thr-313. A Ubiquitin-like domain is found at 343–414 (LRLRVQGKEK…ESGDLIEVWG (72 aa)). Phosphoserine is present on residues Ser-364 and Ser-385.

Interacts with NFATC2, TRAF1, TRAF2 and PRMT1. Interacts with UBE2I/UBC9. In terms of processing, methylation at the N-terminus by PRMT1 modulates interaction with the NFAT complex and results in augmented cytokine production.

Its subcellular location is the nucleus. The protein localises to the cytoplasm. In T-helper 2 (Th2) cells, regulates the magnitude of NFAT-driven transcription of a specific subset of cytokine genes, including IL3, IL4, IL5 and IL13, but not IL2. Recruits PRMT1 to the IL4 promoter; this leads to enhancement of histone H4 'Arg-3'-methylation and facilitates subsequent histone acetylation at the IL4 locus, thus promotes robust cytokine expression. Down-regulates formation of poly-SUMO chains by UBE2I/UBC9. The polypeptide is NFATC2-interacting protein (Nfatc2ip) (Rattus norvegicus (Rat)).